Reading from the N-terminus, the 129-residue chain is Small ribosomal subunit protein uS12 (129 aa).

A disordered region spans residues 110–129 (RKQGRSRYGAHRKQVAATKK).

Belongs to the universal ribosomal protein uS12 family. Part of the 30S ribosomal subunit. Contacts proteins S8 and S17. May interact with IF1 in the 30S initiation complex.

Its function is as follows. With S4 and S5 plays an important role in translational accuracy. Functionally, interacts with and stabilizes bases of the 16S rRNA that are involved in tRNA selection in the A site and with the mRNA backbone. Located at the interface of the 30S and 50S subunits, it traverses the body of the 30S subunit contacting proteins on the other side and probably holding the rRNA structure together. The combined cluster of proteins S8, S12 and S17 appears to hold together the shoulder and platform of the 30S subunit. This chain is Small ribosomal subunit protein uS12, found in Rickettsia prowazekii (strain Madrid E).